A 161-amino-acid chain; its full sequence is Putative 4-hydroxy-4-methyl-2-oxoglutarate aldolase (161 aa).

Substrate-binding positions include 75 to 78 and R97; that span reads GDNL. D98 contacts a divalent metal cation.

Belongs to the class II aldolase/RraA-like family. Homotrimer. A divalent metal cation serves as cofactor.

It catalyses the reaction 4-hydroxy-4-methyl-2-oxoglutarate = 2 pyruvate. It carries out the reaction oxaloacetate + H(+) = pyruvate + CO2. In terms of biological role, catalyzes the aldol cleavage of 4-hydroxy-4-methyl-2-oxoglutarate (HMG) into 2 molecules of pyruvate. Also contains a secondary oxaloacetate (OAA) decarboxylase activity due to the common pyruvate enolate transition state formed following C-C bond cleavage in the retro-aldol and decarboxylation reactions. The polypeptide is Putative 4-hydroxy-4-methyl-2-oxoglutarate aldolase (Alkalilimnicola ehrlichii (strain ATCC BAA-1101 / DSM 17681 / MLHE-1)).